The sequence spans 846 residues: Protein kintoun (846 aa).

4 disordered regions span residues 216 to 240 (TAEE…GKPE), 372 to 405 (LRHF…DSKA), 574 to 631 (QALK…ESAC), and 762 to 846 (KKNQ…EMDD). Residues 372 to 382 (LRHFSREDSGV) are compositionally biased toward basic and acidic residues. The residue at position 380 (Ser-380) is a Phosphoserine. The span at 391-400 (PVEEDPDGEL) shows a compositional bias: acidic residues. Residues 583–603 (GTKEEEEKGNQDQEPESDKQH) are compositionally biased toward basic and acidic residues. Composition is skewed to basic residues over residues 611–622 (KAGKKQRKRNKK) and 762–776 (KKNQ…RAQQ). Phosphoserine is present on Ser-780. The span at 795-809 (LKQQENQSRNCNKPN) shows a compositional bias: polar residues.

The protein belongs to the PIH1 family. Kintoun subfamily. In terms of assembly, interacts with Pp1alpha-96A, Pp1-87B, Pp1-13C and flw.

Its subcellular location is the cytoplasm. Functionally, required for cytoplasmic pre-assembly of axonemal dyneins, thereby playing a central role in motility in cilia and flagella. Involved in pre-assembly of dynein arm complexes in the cytoplasm before intraflagellar transport loads them for the ciliary compartment. The sequence is that of Protein kintoun from Drosophila yakuba (Fruit fly).